Here is a 274-residue protein sequence, read N- to C-terminus: Large ribosomal subunit protein uL2cz/uL2cy (274 aa).

2 disordered regions span residues 1-20 (MAIH…AVDS) and 223-274 (MNPV…RRSK).

Belongs to the universal ribosomal protein uL2 family. In terms of assembly, part of the 50S ribosomal subunit.

The protein resides in the plastid. It localises to the chloroplast. The polypeptide is Large ribosomal subunit protein uL2cz/uL2cy (rpl2-A) (Eucalyptus globulus subsp. globulus (Tasmanian blue gum)).